The sequence spans 319 residues: tRNA uridine(34) hydroxylase (319 aa).

Residues 124-218 enclose the Rhodanese domain; that stretch reads LDEDTVILDA…YGKNEETKGE (95 aa). The Cysteine persulfide intermediate role is filled by C178.

The protein belongs to the TrhO family.

The enzyme catalyses uridine(34) in tRNA + AH2 + O2 = 5-hydroxyuridine(34) in tRNA + A + H2O. Functionally, catalyzes oxygen-dependent 5-hydroxyuridine (ho5U) modification at position 34 in tRNAs. In Listeria welshimeri serovar 6b (strain ATCC 35897 / DSM 20650 / CCUG 15529 / CIP 8149 / NCTC 11857 / SLCC 5334 / V8), this protein is tRNA uridine(34) hydroxylase.